The chain runs to 373 residues: Carboxylesterase/phospholipase LipF (373 aa).

An Involved in the stabilization of the negatively charged intermediate by the formation of the oxyanion hole motif is present at residues 116-118 (HGG). Residues Ser186, Glu285, and His315 contribute to the active site.

This sequence belongs to the 'GDXG' lipolytic enzyme family.

It carries out the reaction a carboxylic ester + H2O = an alcohol + a carboxylate + H(+). It catalyses the reaction a 1,2-diacyl-sn-glycero-3-phosphocholine + H2O = phosphocholine + a 1,2-diacyl-sn-glycerol + H(+). Functionally, a short-chain esterase and phospholipase. The chain is Carboxylesterase/phospholipase LipF from Mycobacterium tuberculosis (strain CDC 1551 / Oshkosh).